The sequence spans 514 residues: Na(+)/H(+) antiporter NhaB (514 aa).

Helical transmembrane passes span 21-41 (LAIV…SPFI), 43-63 (GWLL…CYPL), 88-108 (IMAN…IFFM), 143-163 (FLDA…FYGV), 203-223 (LMMH…VGEP), 239-259 (FFLR…LTCF), 304-324 (ALIA…VGLI), 349-369 (QESL…AVII), 390-410 (LALF…VFVA), 448-468 (ATPN…SPLI), and 484-504 (IVLS…ATIW).

The protein belongs to the NhaB Na(+)/H(+) (TC 2.A.34) antiporter family.

Its subcellular location is the cell inner membrane. The catalysed reaction is 2 Na(+)(in) + 3 H(+)(out) = 2 Na(+)(out) + 3 H(+)(in). In terms of biological role, na(+)/H(+) antiporter that extrudes sodium in exchange for external protons. This Haemophilus influenzae (strain ATCC 51907 / DSM 11121 / KW20 / Rd) protein is Na(+)/H(+) antiporter NhaB.